The sequence spans 225 residues: Thaumatin-like protein (225 aa).

A signal peptide spans 1-24 (MSTFKSLSLSALLFIAFLFTCARG). Cystine bridges form between Cys-33–Cys-224, Cys-74–Cys-84, Cys-89–Cys-95, Cys-140–Cys-213, Cys-146–Cys-196, Cys-154–Cys-164, Cys-168–Cys-177, and Cys-178–Cys-183. Residue Asn-187 is glycosylated (N-linked (GlcNAc...) asparagine).

This sequence belongs to the thaumatin family. N-glycosylated. Woody stem plug.

It localises to the secreted. In terms of biological role, has antifungal activity. The chain is Thaumatin-like protein (tlp) from Actinidia deliciosa (Kiwi).